The sequence spans 287 residues: ATP synthase subunit a (287 aa).

A run of 6 helical transmembrane segments spans residues 37 to 57 (LDSVAVSVILGVLGLFVMWLA), 96 to 116 (FIAPLALTVFVWIFLMNAMDL), 144 to 164 (DLSTTLGLSSAVLILCFVYSI), 187 to 207 (PVFALILGVVNLLMQIIEYVA), 224 to 244 (ELVFMLIALMGGAAAMSLSGV), and 266 to 286 (TLQAFIFMMLTLIYLGQAHEA).

The protein belongs to the ATPase A chain family. F-type ATPases have 2 components, CF(1) - the catalytic core - and CF(0) - the membrane proton channel. CF(1) has five subunits: alpha(3), beta(3), gamma(1), delta(1), epsilon(1). CF(0) has three main subunits: a(1), b(2) and c(9-12). The alpha and beta chains form an alternating ring which encloses part of the gamma chain. CF(1) is attached to CF(0) by a central stalk formed by the gamma and epsilon chains, while a peripheral stalk is formed by the delta and b chains.

The protein localises to the cell inner membrane. In terms of biological role, key component of the proton channel; it plays a direct role in the translocation of protons across the membrane. This chain is ATP synthase subunit a, found in Acidovorax ebreus (strain TPSY) (Diaphorobacter sp. (strain TPSY)).